Here is a 46-residue protein sequence, read N- to C-terminus: Phospholipase A2 superbin c (46 aa).

Y28, G30, and G32 together coordinate Ca(2+). C29 and C45 are joined by a disulfide.

Ca(2+) is required as a cofactor. In terms of tissue distribution, expressed by the venom gland.

The protein localises to the secreted. The enzyme catalyses a 1,2-diacyl-sn-glycero-3-phosphocholine + H2O = a 1-acyl-sn-glycero-3-phosphocholine + a fatty acid + H(+). Its function is as follows. Snake venom phospholipase A2 (PLA2) that inhibits collagen-induced platelet aggregation. In terms of inhibition of platelet aggregation, superbin c is more potent as superbin d. PLA2 catalyzes the calcium-dependent hydrolysis of the 2-acyl groups in 3-sn-phosphoglycerides. The chain is Phospholipase A2 superbin c from Austrelaps superbus (Lowland copperhead snake).